The sequence spans 600 residues: Glutamine--fructose-6-phosphate aminotransferase [isomerizing] (600 aa).

The Nucleophile; for GATase activity role is filled by Cys-2. Positions 2-217 constitute a Glutamine amidotransferase type-2 domain; sequence CGIVGFIGEQ…DKEIVIVMKE (216 aa). SIS domains follow at residues 283-422 and 452-590; these read IRNA…AKGE and LAKQ…VDKP. The active-site For Fru-6P isomerization activity is the Lys-595.

Homodimer.

It is found in the cytoplasm. The enzyme catalyses D-fructose 6-phosphate + L-glutamine = D-glucosamine 6-phosphate + L-glutamate. In terms of biological role, catalyzes the first step in hexosamine metabolism, converting fructose-6P into glucosamine-6P using glutamine as a nitrogen source. The chain is Glutamine--fructose-6-phosphate aminotransferase [isomerizing] from Bacillus anthracis.